The primary structure comprises 129 residues: uncharacterized protein (129 aa).

Residues 23-101 (KASTSSESCQ…TAATRTTSKK (79 aa)) form a disordered region. Composition is skewed to basic and acidic residues over residues 31 to 40 (CQRRGVRDDT) and 67 to 80 (EGDR…EKEP).

This is an uncharacterized protein from Ictaluridae (bullhead catfishes).